A 1578-amino-acid chain; its full sequence is MGNQDGKLKRSAGDASHEGGGAEDAAGPRDAEITKKASGSKKALGKHGKGGGGSGETSKKKSKSDSRASVFSNLRIRKNLTKGKGACDSREDVLDSQALPIGELDSAHSIVTKTPDLSLSAEETGLSDTECADPFEVIHPGASRPAEAGVGIQATAEDLETAAGAQDGQRTSSGSDTDIYSFHSATEQEDLLSDIQQAIRLQQQQQQKLLLQDSEEPAAPPTAISPQPGAFLGLDQFLLGPRSEAEKDTVQALPVRPDLPETTKSLVPEHPPSSGSHLTSETPGYATAPSAVTDSLSSPAFTFPEAGPGEGAAGVPVAGTGDTDEECEEDAFEDAPRGSPGEEWVPEVEEASQRLEKEPEEGMRESITSAVVSLPGSPAPSPRCFKPYPLITPCYIKTTTRQLSSPNHSPSQSPNQSPRIKKRPDPSVSRSSRTALASAAAPAKKHRLEGGLTGGLSRSADWTEELGVRTPGAGGSVHLLGRGATADDSGGGSPVLAAKAPGAPATADGFQNVFTGRTLLEKLFSQQENGPPEEAEKFCSRIIAMGLLLPFSDCFREPCNQNAGSSSAPFDQDQLYTWAAVSQPTHSMDYSEGQFPRREPSMWPSSKLPEEEPSPKDVDTEPKSSILESPKKCSNGVQQEVFDVKSEGQATVIQQLEQTIEDLRTKIAELEKQYPALDLEGPRGLSGLENGLTASADVSLDALVLHGKVAQPPRTLEAKSIQTSPTEEGRILTLPPPKAPPEGLLGSPAAASGESALLTSPSGPQTKFCSEISLIVSPRRISVQLDAQQIQSASQLPPPPPLLGSDSQGQPSQPSLHTESETSHEHSVSSSFGNNCNVPPAPPLPCTESSSFMPGLGMAIPPPPCLSDITVPALPSPTAPALQFSNLQGPEMLPAPPQPPPLPGLGVPPPPPAPPLPGMGIPPPPPLPGMGIPPPPPLPGMGISPLPPLPGMGIPPPPPLPGVGIPPPPPLPGVGIPPPPPLPGVGIPPPPPLPGVGIPPPPPLPGVGIPPPPPLPGVGIPPPPPLPGVGIPPPPPLPGVGIPPPPPLPGSGIPPPPALPGVAIPPPPPLPGMGVPPPAPPPPGAGIPPPPLLPGSGPPHSSQVGSSTLPAAPQGCGFLFPPLPTGLFGLGMNQDRVARKQLIEPCRPMKPLYWTRIQLHSKRDSSPSLIWEKIEEPSIDCHEFEELFSKTAVKERKKPISDTISKTKAKQVVKLLSNKRSQAVGILMSSLHLDMKDIQHAVVNLDNSVVDLETLQALYENRAQSDELEKIEKHSRSSKDKENAKSLDKPEQFLYELSLIPNFSERVFCILFQSTFSESICSIRRKLELLQKLCETLKNGPGVMQVLGLVLAFGNYMNAGNKTRGQADGFGLDILPKLKDVKSSDNSRSLLSYIVSYYLRNFDEDAGKEQCVFPLAEPQELFQASQMKFEDFQKDLRKLKKDLKACEAEAGKVYQVSSAEHMQPFKENMEQFISQAKIDQESQEAALTETHKCFLETTAYYFMKPKLGEKEVSPNVFFSVWHEFSSDFKDAWKKENKLILQERVKEAEEVCRQKKGKSLYKVKPRHDSGIKAKISMKT.

3 stretches are compositionally biased toward basic and acidic residues: residues 1–17, 26–35, and 57–66; these read MGNQ…DASH, AGPRDAEITK, and TSKKKSKSDS. The segment at 1 to 73 is disordered; it reads MGNQDGKLKR…SDSRASVFSN (73 aa). Phosphoserine is present on serine 89. Disordered stretches follow at residues 208-230, 244-383, and 401-458; these read KLLL…QPGA, EAEK…PSPR, and RQLS…GLSR. Polar residues-rich tracts occupy residues 273–282 and 290–300; these read SSGSHLTSET and SAVTDSLSSPA. The segment covering 322–333 has biased composition (acidic residues); it reads DTDEECEEDAFE. The segment covering 351 to 364 has biased composition (basic and acidic residues); the sequence is ASQRLEKEPEEGMR. Low complexity-rich tracts occupy residues 404 to 418 and 427 to 442; these read SSPN…NQSP and SVSR…AAAP. Serine 459, serine 489, and serine 493 each carry phosphoserine. The segment at 587–634 is disordered; it reads SMDYSEGQFPRREPSMWPSSKLPEEEPSPKDVDTEPKSSILESPKKCS. Basic and acidic residues predominate over residues 608–622; that stretch reads LPEEEPSPKDVDTEP. The stretch at 643 to 683 forms a coiled coil; the sequence is DVKSEGQATVIQQLEQTIEDLRTKIAELEKQYPALDLEGPR. Disordered stretches follow at residues 714-765, 786-836, and 880-944; these read RTLE…SGPQ, DAQQ…GNNC, and PALQ…MGIS. The FH1 domain occupies 735-1124; sequence PPPKAPPEGL…GCGFLFPPLP (390 aa). Over residues 786-795 the composition is skewed to polar residues; the sequence is DAQQIQSASQ. The segment covering 803–817 has biased composition (low complexity); that stretch reads LGSDSQGQPSQPSLH. A compositionally biased stretch (basic and acidic residues) spans 818-827; the sequence is TESETSHEHS. Positions 893 to 944 are enriched in pro residues; that stretch reads LPAPPQPPPLPGLGVPPPPPAPPLPGMGIPPPPPLPGMGIPPPPPLPGMGIS. A run of 12 repeats spans residues 919 to 929, 930 to 940, 941 to 951, 952 to 962, 963 to 973, 974 to 984, 985 to 995, 996 to 1006, 1007 to 1017, 1018 to 1028, 1029 to 1039, and 1040 to 1050. Residues 919 to 1039 form a 12 X 11 AA tandem repeats of [MV]-G-I-P-P-P-P-P-L-P-G region; sequence MGIPPPPPLP…GIPPPPPLPG (121 aa). Pro residues predominate over residues 1037–1097; that stretch reads LPGVGIPPPP…PPPPLLPGSG (61 aa). Residues 1037 to 1108 form a disordered region; sequence LPGVGIPPPP…PHSSQVGSST (72 aa). Positions 1139-1554 constitute an FH2 domain; the sequence is RKQLIEPCRP…KEAEEVCRQK (416 aa). Residues 1419–1455 adopt a coiled-coil conformation; sequence QELFQASQMKFEDFQKDLRKLKKDLKACEAEAGKVYQ. The important for interaction with SPIRE1 stretch occupies residues 1571–1578; that stretch reads KAKISMKT.

This sequence belongs to the formin homology family. Cappuccino subfamily. In terms of assembly, interacts with SPIRE1. Binds actin. Interacts with CDKN1A. Detected in brain and in oocytes (at protein level). Expressed almost exclusively in the developing and mature central nervous system. Detected in oocytes.

The protein localises to the cytoplasm. Its subcellular location is the cytoskeleton. The protein resides in the cytosol. It is found in the perinuclear region. It localises to the nucleus. The protein localises to the nucleolus. Its subcellular location is the cell membrane. The protein resides in the cell cortex. It is found in the cytoplasmic vesicle membrane. Its function is as follows. Actin-binding protein that is involved in actin cytoskeleton assembly and reorganization. Acts as an actin nucleation factor and promotes assembly of actin filaments together with SPIRE1 and SPIRE2. Involved in intracellular vesicle transport along actin fibers, providing a novel link between actin cytoskeleton dynamics and intracellular transport. Required for asymmetric spindle positioning, asymmetric oocyte division and polar body extrusion during female germ cell meiosis. Plays a role in responses to DNA damage, cellular stress and hypoxia by protecting CDKN1A against degradation, and thereby plays a role in stress-induced cell cycle arrest. Also acts in the nucleus: together with SPIRE1 and SPIRE2, promotes assembly of nuclear actin filaments in response to DNA damage in order to facilitate movement of chromatin and repair factors after DNA damage. Protects cells against apoptosis by protecting CDKN1A against degradation. This is Formin-2 (Fmn2) from Mus musculus (Mouse).